The chain runs to 483 residues: Aspartyl/glutamyl-tRNA(Asn/Gln) amidotransferase subunit B (483 aa).

Belongs to the GatB/GatE family. GatB subfamily. In terms of assembly, heterotrimer of A, B and C subunits.

The catalysed reaction is L-glutamyl-tRNA(Gln) + L-glutamine + ATP + H2O = L-glutaminyl-tRNA(Gln) + L-glutamate + ADP + phosphate + H(+). The enzyme catalyses L-aspartyl-tRNA(Asn) + L-glutamine + ATP + H2O = L-asparaginyl-tRNA(Asn) + L-glutamate + ADP + phosphate + 2 H(+). Functionally, allows the formation of correctly charged Asn-tRNA(Asn) or Gln-tRNA(Gln) through the transamidation of misacylated Asp-tRNA(Asn) or Glu-tRNA(Gln) in organisms which lack either or both of asparaginyl-tRNA or glutaminyl-tRNA synthetases. The reaction takes place in the presence of glutamine and ATP through an activated phospho-Asp-tRNA(Asn) or phospho-Glu-tRNA(Gln). The polypeptide is Aspartyl/glutamyl-tRNA(Asn/Gln) amidotransferase subunit B (Marinobacter nauticus (strain ATCC 700491 / DSM 11845 / VT8) (Marinobacter aquaeolei)).